The chain runs to 505 residues: ATP synthase subunit alpha (505 aa).

ATP is bound at residue 170–177 (GDRQTGKS).

The protein belongs to the ATPase alpha/beta chains family. As to quaternary structure, F-type ATPases have 2 components, CF(1) - the catalytic core - and CF(0) - the membrane proton channel. CF(1) has five subunits: alpha(3), beta(3), gamma(1), delta(1), epsilon(1). CF(0) has four main subunits: a(1), b(1), b'(1) and c(9-12).

It localises to the cellular thylakoid membrane. The enzyme catalyses ATP + H2O + 4 H(+)(in) = ADP + phosphate + 5 H(+)(out). Its function is as follows. Produces ATP from ADP in the presence of a proton gradient across the membrane. The alpha chain is a regulatory subunit. This chain is ATP synthase subunit alpha, found in Prochlorococcus marinus (strain MIT 9215).